The chain runs to 227 residues: Biosynthetic peptidoglycan transglycosylase (227 aa).

A helical transmembrane segment spans residues 7–27 (VALLTLLLLVAAPYVLTLVYG).

The protein belongs to the glycosyltransferase 51 family.

It is found in the cell inner membrane. The catalysed reaction is [GlcNAc-(1-&gt;4)-Mur2Ac(oyl-L-Ala-gamma-D-Glu-L-Lys-D-Ala-D-Ala)](n)-di-trans,octa-cis-undecaprenyl diphosphate + beta-D-GlcNAc-(1-&gt;4)-Mur2Ac(oyl-L-Ala-gamma-D-Glu-L-Lys-D-Ala-D-Ala)-di-trans,octa-cis-undecaprenyl diphosphate = [GlcNAc-(1-&gt;4)-Mur2Ac(oyl-L-Ala-gamma-D-Glu-L-Lys-D-Ala-D-Ala)](n+1)-di-trans,octa-cis-undecaprenyl diphosphate + di-trans,octa-cis-undecaprenyl diphosphate + H(+). The protein operates within cell wall biogenesis; peptidoglycan biosynthesis. In terms of biological role, peptidoglycan polymerase that catalyzes glycan chain elongation from lipid-linked precursors. The sequence is that of Biosynthetic peptidoglycan transglycosylase from Rhodopseudomonas palustris (strain HaA2).